The chain runs to 137 residues: uncharacterized protein (137 aa).

This is an uncharacterized protein from Acidianus convivator (ATV).